Here is a 180-residue protein sequence, read N- to C-terminus: Large ribosomal subunit protein uL6 (180 aa).

This sequence belongs to the universal ribosomal protein uL6 family. As to quaternary structure, part of the 50S ribosomal subunit.

Functionally, this protein binds to the 23S rRNA, and is important in its secondary structure. It is located near the subunit interface in the base of the L7/L12 stalk, and near the tRNA binding site of the peptidyltransferase center. This Cutibacterium acnes (strain DSM 16379 / KPA171202) (Propionibacterium acnes) protein is Large ribosomal subunit protein uL6.